The sequence spans 611 residues: Autophagy-related protein 22-2 (611 aa).

Residues 1–24 (MRADDNPSARSLHAQFPGDDTRPT) are disordered. Residues 35 to 55 (YGWAAEVFTVCAMGSFLPITL) form a helical membrane-spanning segment. Asn-78 carries N-linked (GlcNAc...) asparagine glycosylation. 3 helical membrane passes run 116–136 (TASF…VLII), 151–171 (LLVA…SVVP), and 175–195 (IVGA…FVLL). N-linked (GlcNAc...) asparagine glycosylation occurs at Asn-221. Helical transmembrane passes span 286-306 (IGIG…VIIA) and 316-336 (LVLF…ALWL). N-linked (GlcNAc...) asparagine glycosylation occurs at Asn-353. 6 helical membrane passes run 380–400 (ILLF…VSGT), 414–434 (AALG…AFSW), 449–469 (IIAC…GFVP), 483–503 (WEMF…SSYC), 521–541 (ALYA…VGLI), and 551–571 (AFVF…LVDV).

It belongs to the ATG22 family.

The protein resides in the vacuole membrane. Its function is as follows. Vacuolar effluxer which mediate the efflux of amino acids resulting from autophagic degradation. The release of autophagic amino acids allows the maintenance of protein synthesis and viability during nitrogen starvation. This is Autophagy-related protein 22-2 (atg22-2) from Aspergillus clavatus (strain ATCC 1007 / CBS 513.65 / DSM 816 / NCTC 3887 / NRRL 1 / QM 1276 / 107).